The chain runs to 183 residues: Holliday junction branch migration complex subunit RuvA (183 aa).

The tract at residues 1 to 64 (MVVGIEGIIT…EDSNKFYGFL (64 aa)) is domain I. The domain II stretch occupies residues 65–139 (DKDEQKMFEM…DTRTKLENVS (75 aa)). A region of interest (flexible linker) is located at residue Ser139. The interval 139–183 (SDDKSEALAALLTLGFKQEKIISVLASAQATGTSELIKEALKKLR) is domain III.

The protein belongs to the RuvA family. As to quaternary structure, homotetramer. Forms an RuvA(8)-RuvB(12)-Holliday junction (HJ) complex. HJ DNA is sandwiched between 2 RuvA tetramers; dsDNA enters through RuvA and exits via RuvB. An RuvB hexamer assembles on each DNA strand where it exits the tetramer. Each RuvB hexamer is contacted by two RuvA subunits (via domain III) on 2 adjacent RuvB subunits; this complex drives branch migration. In the full resolvosome a probable DNA-RuvA(4)-RuvB(12)-RuvC(2) complex forms which resolves the HJ.

It is found in the cytoplasm. The RuvA-RuvB-RuvC complex processes Holliday junction (HJ) DNA during genetic recombination and DNA repair, while the RuvA-RuvB complex plays an important role in the rescue of blocked DNA replication forks via replication fork reversal (RFR). RuvA specifically binds to HJ cruciform DNA, conferring on it an open structure. The RuvB hexamer acts as an ATP-dependent pump, pulling dsDNA into and through the RuvAB complex. HJ branch migration allows RuvC to scan DNA until it finds its consensus sequence, where it cleaves and resolves the cruciform DNA. The protein is Holliday junction branch migration complex subunit RuvA of Campylobacter jejuni subsp. doylei (strain ATCC BAA-1458 / RM4099 / 269.97).